Reading from the N-terminus, the 614-residue chain is Dihydroxy-acid dehydratase (614 aa).

A Mg(2+)-binding site is contributed by aspartate 81. [2Fe-2S] cluster is bound at residue cysteine 122. Positions 123 and 124 each coordinate Mg(2+). Position 124 is an N6-carboxylysine (lysine 124). Cysteine 193 is a [2Fe-2S] cluster binding site. Glutamate 489 is a Mg(2+) binding site. The active-site Proton acceptor is the serine 515.

It belongs to the IlvD/Edd family. Homodimer. Requires [2Fe-2S] cluster as cofactor. The cofactor is Mg(2+).

The enzyme catalyses (2R)-2,3-dihydroxy-3-methylbutanoate = 3-methyl-2-oxobutanoate + H2O. It catalyses the reaction (2R,3R)-2,3-dihydroxy-3-methylpentanoate = (S)-3-methyl-2-oxopentanoate + H2O. It participates in amino-acid biosynthesis; L-isoleucine biosynthesis; L-isoleucine from 2-oxobutanoate: step 3/4. The protein operates within amino-acid biosynthesis; L-valine biosynthesis; L-valine from pyruvate: step 3/4. In terms of biological role, functions in the biosynthesis of branched-chain amino acids. Catalyzes the dehydration of (2R,3R)-2,3-dihydroxy-3-methylpentanoate (2,3-dihydroxy-3-methylvalerate) into 2-oxo-3-methylpentanoate (2-oxo-3-methylvalerate) and of (2R)-2,3-dihydroxy-3-methylbutanoate (2,3-dihydroxyisovalerate) into 2-oxo-3-methylbutanoate (2-oxoisovalerate), the penultimate precursor to L-isoleucine and L-valine, respectively. The protein is Dihydroxy-acid dehydratase of Cellvibrio japonicus (strain Ueda107) (Pseudomonas fluorescens subsp. cellulosa).